Reading from the N-terminus, the 557-residue chain is Dihydroxy-acid dehydratase (557 aa).

Residue Cys-50 participates in [2Fe-2S] cluster binding. Position 82 (Asp-82) interacts with Mg(2+). Position 123 (Cys-123) interacts with [2Fe-2S] cluster. Asp-124 and Lys-125 together coordinate Mg(2+). N6-carboxylysine is present on Lys-125. Cys-195 contacts [2Fe-2S] cluster. Glu-447 contributes to the Mg(2+) binding site. Ser-473 acts as the Proton acceptor in catalysis.

This sequence belongs to the IlvD/Edd family. In terms of assembly, homodimer. It depends on [2Fe-2S] cluster as a cofactor. Mg(2+) is required as a cofactor.

The catalysed reaction is (2R)-2,3-dihydroxy-3-methylbutanoate = 3-methyl-2-oxobutanoate + H2O. It carries out the reaction (2R,3R)-2,3-dihydroxy-3-methylpentanoate = (S)-3-methyl-2-oxopentanoate + H2O. The protein operates within amino-acid biosynthesis; L-isoleucine biosynthesis; L-isoleucine from 2-oxobutanoate: step 3/4. It participates in amino-acid biosynthesis; L-valine biosynthesis; L-valine from pyruvate: step 3/4. Its function is as follows. Functions in the biosynthesis of branched-chain amino acids. Catalyzes the dehydration of (2R,3R)-2,3-dihydroxy-3-methylpentanoate (2,3-dihydroxy-3-methylvalerate) into 2-oxo-3-methylpentanoate (2-oxo-3-methylvalerate) and of (2R)-2,3-dihydroxy-3-methylbutanoate (2,3-dihydroxyisovalerate) into 2-oxo-3-methylbutanoate (2-oxoisovalerate), the penultimate precursor to L-isoleucine and L-valine, respectively. The chain is Dihydroxy-acid dehydratase from Burkholderia thailandensis (strain ATCC 700388 / DSM 13276 / CCUG 48851 / CIP 106301 / E264).